Here is a 320-residue protein sequence, read N- to C-terminus: Eukaryotic translation initiation factor 3 subunit G (320 aa).

Residues 1 to 25 (MPTGDFDSKPSWADQVEEEGEDDKC) are disordered. 2 positions are modified to phosphoserine: Ser-8 and Ser-11. Phosphothreonine occurs at positions 38 and 41. A phosphoserine mark is found at Ser-42, Ser-189, Ser-223, and Ser-264. Positions 209–234 (KTGKYVPPSLRDGASRRGESMQPNRR) are disordered. Residues 221-234 (GASRRGESMQPNRR) are compositionally biased toward basic and acidic residues. The RRM domain maps to 239-317 (ATIRVTNLSE…LILNVEWAKP (79 aa)).

The protein belongs to the eIF-3 subunit G family. Component of the eukaryotic translation initiation factor 3 (eIF-3) complex, which is composed of 13 subunits: EIF3A, EIF3B, EIF3C, EIF3D, EIF3E, EIF3F, EIF3G, EIF3H, EIF3I, EIF3J, EIF3K, EIF3L and EIF3M. The eIF-3 complex appears to include 3 stable modules: module A is composed of EIF3A, EIF3B, EIF3G and EIF3I; module B is composed of EIF3F, EIF3H, and EIF3M; and module C is composed of EIF3C, EIF3D, EIF3E, EIF3K and EIF3L. EIF3C of module C binds EIF3B of module A and EIF3H of module B, thereby linking the three modules. EIF3J is a labile subunit that binds to the eIF-3 complex via EIF3B. The eIF-3 complex interacts with RPS6KB1 under conditions of nutrient depletion. Mitogenic stimulation leads to binding and activation of a complex composed of FRAP1 and RAPTOR, leading to phosphorylation and release of RPS6KB1 and binding of EIF4B to eIF-3. Interacts (via C-terminus) with AIFM1 (via N-terminus). Interacts with DHX33; the interaction is independent of RNA. In terms of processing, phosphorylated. Phosphorylation is enhanced upon serum stimulation.

It is found in the cytoplasm. The protein resides in the nucleus. The protein localises to the perinuclear region. Functionally, RNA-binding component of the eukaryotic translation initiation factor 3 (eIF-3) complex, which is required for several steps in the initiation of protein synthesis. The eIF-3 complex associates with the 40S ribosome and facilitates the recruitment of eIF-1, eIF-1A, eIF-2:GTP:methionyl-tRNAi and eIF-5 to form the 43S pre-initiation complex (43S PIC). The eIF-3 complex stimulates mRNA recruitment to the 43S PIC and scanning of the mRNA for AUG recognition. The eIF-3 complex is also required for disassembly and recycling of post-termination ribosomal complexes and subsequently prevents premature joining of the 40S and 60S ribosomal subunits prior to initiation. The eIF-3 complex specifically targets and initiates translation of a subset of mRNAs involved in cell proliferation, including cell cycling, differentiation and apoptosis, and uses different modes of RNA stem-loop binding to exert either translational activation or repression. This subunit can bind 18S rRNA. The polypeptide is Eukaryotic translation initiation factor 3 subunit G (Bos taurus (Bovine)).